The primary structure comprises 319 residues: NADH-quinone oxidoreductase subunit H 1 (319 aa).

9 helical membrane-spanning segments follow: residues 1-21 (MIGL…LLVV), 77-97 (ILAP…VAFG), 107-127 (VGVL…MLGA), 147-167 (LAYE…AGSL), 179-199 (VWFV…GVAA), 214-234 (LVAG…FLGE), 238-258 (VLLV…GPWL), 262-282 (IWFG…RATL), and 293-313 (FAWK…GIVV).

This sequence belongs to the complex I subunit 1 family. In terms of assembly, NDH-1 is composed of 14 different subunits. Subunits NuoA, H, J, K, L, M, N constitute the membrane sector of the complex.

The protein resides in the cell inner membrane. It catalyses the reaction a quinone + NADH + 5 H(+)(in) = a quinol + NAD(+) + 4 H(+)(out). Its function is as follows. NDH-1 shuttles electrons from NADH, via FMN and iron-sulfur (Fe-S) centers, to quinones in the respiratory chain. The immediate electron acceptor for the enzyme in this species is believed to be ubiquinone. Couples the redox reaction to proton translocation (for every two electrons transferred, four hydrogen ions are translocated across the cytoplasmic membrane), and thus conserves the redox energy in a proton gradient. This subunit may bind ubiquinone. The sequence is that of NADH-quinone oxidoreductase subunit H 1 from Rhodopseudomonas palustris (strain HaA2).